A 129-amino-acid chain; its full sequence is Glycine cleavage system H protein (129 aa).

Residues 24–106 enclose the Lipoyl-binding domain; the sequence is TYTVGITEHA…YAGGWIFKIK (83 aa). Lys-65 carries the post-translational modification N6-lipoyllysine.

Belongs to the GcvH family. The glycine cleavage system is composed of four proteins: P, T, L and H. (R)-lipoate serves as cofactor.

The glycine cleavage system catalyzes the degradation of glycine. The H protein shuttles the methylamine group of glycine from the P protein to the T protein. This is Glycine cleavage system H protein from Escherichia coli O127:H6 (strain E2348/69 / EPEC).